We begin with the raw amino-acid sequence, 373 residues long: MASYGFPLTASSLVDWTSLTFSPIEVNGHIQCTYSPEVAEWGAPHFVKDPYLRVHGLAPALNYGQQIFEGMKAFRTPTGSIRLFRPKMNAVRFAHSASFVAIPPVPEALFLRAVHLAVGLNSEFVPPYDSRGSALYIRPIAFASSATANLAPADHFTFCVFVMPVAPLSTGAGQGLRALVVEDVDRAAPKGTGSAKVGGNYAPIVTTMQRAKADGYGLTLHLDSATHTMVDEFSASGFIGVRVDAGKTTMVVPDSPTILRSITVDSMCRIAESFGWQVQRRAVSFTELAELSEAFAVGTAFILTPVRAITRPCTHTCIEYTADYRSSASAYTRLLETLQGIQQGWLDDAWGWTEEVQDPSSDEFITDTVQARR.

Residue Arg-92 coordinates pyridoxal 5'-phosphate. Position 196 is an N6-(pyridoxal phosphate)lysine (Lys-196). Glu-232 contacts pyridoxal 5'-phosphate.

The protein belongs to the class-IV pyridoxal-phosphate-dependent aminotransferase family. Requires pyridoxal 5'-phosphate as cofactor.

The protein operates within mycotoxin biosynthesis. In terms of biological role, transaminase; part of the gene clusters that mediate the biosynthesis of AM-toxins, host-selective toxins (HSTs) causing Alternaria blotch on apple, a worldwide distributed disease. AM-toxins are cyclic depsipeptides containing the 3 residues 2-hydroxy-isovaleric acid (2-HIV), dehydroalanine, L-alanine which are common for all 3 AM-toxins I to III. The fourth precursor is L-alpha-amino-methoxyphenyl-valeric acid (L-Amv) for AM-toxin I, L-alpha-amino-phenyl-valeric acid (L-Apv) for AM-toxin II, and L-alpha-amino-hydroxyphenyl-valeric acid (L-Ahv) for AM-toxin III. AM-toxins have two target sites for affecting susceptible apple cells; they cause invagination of the plasma membrane and electrolyte loss and chloroplast disorganization. The non-ribosomal peptide synthetase AMT1 contains 4 catalytic modules and is responsible for activation of each residue in AM-toxin. The aldo-keto reductase AMT2 catalyzes the conversion of 2-keto-isovaleric acid (2-KIV) to 2-hydroxy-isovaleric acid (2-HIV), one of the precursor residues incorporated by AMT1 during AM-toxin biosynthesis, by reduction of its ketone to an alcohol. The cytochrome P450 monooxygenase AMT3 and the thioesterase AMT4 are also important for AM-toxin production, but their exact function within the AM-toxin biosynthesis are not known yet. Up to 21 proteins (including AMT1 to AMT4) are predicted to be involved in AM-toxin biosynthesis since their expression ishighly up-regulated in AM-toxin-producing cultures. The polypeptide is Transaminase AMT5-2 (Alternaria alternata (Alternaria rot fungus)).